A 430-amino-acid chain; its full sequence is Probable GPI-anchored adhesin-like protein PGA32 (430 aa).

The signal sequence occupies residues 1-16; that stretch reads MKVSTLIIVSIPIVSG. Disordered regions lie at residues 88 to 195, 232 to 257, 278 to 302, and 314 to 336; these read LGQV…TVIN, IASA…RGIK, GGNG…SKYF, and SKSI…SSTD. Low complexity-rich tracts occupy residues 92-112 and 122-135; these read TTPS…PTTS and TDTA…TNAR. A compositionally biased stretch (polar residues) spans 141-167; the sequence is TPVTVSGDNVLTLFGNPNLSTGNDQSN. Low complexity-rich tracts occupy residues 168–187 and 233–253; these read SVSK…SSSS and ASAS…SSSA. Positions 289–302 are enriched in polar residues; sequence YKNHSTTSTTSKYF. A compositionally biased stretch (low complexity) spans 314 to 335; the sequence is SKSIYSNSTTSRSSLSVSSSST. A lipid anchor (GPI-anchor amidated glycine) is attached at glycine 401. Positions 402–430 are cleaved as a propeptide — removed in mature form; the sequence is DGNKLIGGNKYLISFMWTNLILTMIMLFT.

Its subcellular location is the cell membrane. In terms of biological role, putative adhesin which is involved in cell adhesion and virulence. The chain is Probable GPI-anchored adhesin-like protein PGA32 (PGA32) from Candida albicans (strain SC5314 / ATCC MYA-2876) (Yeast).